We begin with the raw amino-acid sequence, 522 residues long: Protein nucleotidyltransferase YdiU (522 aa).

ATP contacts are provided by Gly109, Gly111, Arg112, Lys132, Asp144, Gly145, Arg195, and Arg202. Asp271 functions as the Proton acceptor in the catalytic mechanism. Mg(2+) is bound by residues Asn272 and Asp281. Residue Asp281 participates in ATP binding.

Belongs to the SELO family. The cofactor is Mg(2+). Requires Mn(2+) as cofactor.

It carries out the reaction L-seryl-[protein] + ATP = 3-O-(5'-adenylyl)-L-seryl-[protein] + diphosphate. The enzyme catalyses L-threonyl-[protein] + ATP = 3-O-(5'-adenylyl)-L-threonyl-[protein] + diphosphate. It catalyses the reaction L-tyrosyl-[protein] + ATP = O-(5'-adenylyl)-L-tyrosyl-[protein] + diphosphate. The catalysed reaction is L-histidyl-[protein] + UTP = N(tele)-(5'-uridylyl)-L-histidyl-[protein] + diphosphate. It carries out the reaction L-seryl-[protein] + UTP = O-(5'-uridylyl)-L-seryl-[protein] + diphosphate. The enzyme catalyses L-tyrosyl-[protein] + UTP = O-(5'-uridylyl)-L-tyrosyl-[protein] + diphosphate. Functionally, nucleotidyltransferase involved in the post-translational modification of proteins. It can catalyze the addition of adenosine monophosphate (AMP) or uridine monophosphate (UMP) to a protein, resulting in modifications known as AMPylation and UMPylation. This is Protein nucleotidyltransferase YdiU from Burkholderia lata (strain ATCC 17760 / DSM 23089 / LMG 22485 / NCIMB 9086 / R18194 / 383).